The following is a 470-amino-acid chain: Aminoacyl transferase sphA (470 aa).

The pyridoxal 5'-phosphate site is built by serine 212, histidine 244, and threonine 272. Lysine 275 is subject to N6-(pyridoxal phosphate)lysine.

Belongs to the class-II pyridoxal-phosphate-dependent aminotransferase family. BioF subfamily. Homodimer. It depends on pyridoxal 5'-phosphate as a cofactor.

It functions in the pathway secondary metabolite biosynthesis. Its function is as follows. Aminoacyl transferase; part of the gene cluster that mediates the biosynthesis of sphingofungins, bioactive molecules acting as sphingolipid inhibitors via inhibiting serine palmitoyl transferase (SPT). Within the pathway, sphA transfers 2-methyl-aminomalonate and 2-hydroxymethyl-aminomalonate onto the sphB product 3-hydroxyoctadeca-4,10-dienoyl-ACP to produce the precursors of sphingofungins E and F. The substrate specificity of sphA using 2-methyl-aminomalonate and 2-hydroxymethyl-aminomalonate instread of aminomalonate is responsible for the biosynthesis of sphingofungins E and F but not B and C like in Aspergillus fumigatus. The PKS sphB does not contain any putative thioesterase domain for releasing the nascent polyketide chain and it has been suggested that aminoacyl transferases can facilitate the polyketide chain release. The polypeptide is Aminoacyl transferase sphA (Byssochlamys spectabilis (Paecilomyces variotii)).